The sequence spans 173 residues: 16S rRNA aminocarboxypropyltransferase (173 aa).

The S-adenosyl-L-methionine site is built by Thr25, Leu72, Leu96, and Ser115.

The protein belongs to the TDD superfamily. TSR3 family.

The protein resides in the cytoplasm. It catalyses the reaction an N(1)-methylpseudouridine in rRNA + S-adenosyl-L-methionine = N(1)-methyl-N(3)-[(3S)-3-amino-3-carboxypropyl]pseudouridine in rRNA + S-methyl-5'-thioadenosine + H(+). Aminocarboxypropyltransferase that catalyzes the aminocarboxypropyl transfer on pseudouridine corresponding to position 914 in M.jannaschii 16S rRNA. It constitutes the last step in biosynthesis of the hypermodified N1-methyl-N3-(3-amino-3-carboxypropyl) pseudouridine (m1acp3-Psi). In Methanosarcina mazei (strain ATCC BAA-159 / DSM 3647 / Goe1 / Go1 / JCM 11833 / OCM 88) (Methanosarcina frisia), this protein is 16S rRNA aminocarboxypropyltransferase.